We begin with the raw amino-acid sequence, 92 residues long: 10 kDa late embryogenesis abundant protein (92 aa).

Polar residues predominate over residues 1–10; the sequence is MASQQGQQTR. Residues 1 to 92 form a disordered region; that stretch reads MASQQGQQTR…GEREEEEEED (92 aa). Basic and acidic residues-rich tracts occupy residues 11-26 and 38-71; these read KIPEQEKKDLDQRAAK and KSLEAQERLAEGRSKGGQTRKDQLGTEGYKEMGK.

It belongs to the small hydrophilic plant seed protein family. As to expression, maximally expressed in dry seeds. Also present in mid-maturation embryos.

Its function is as follows. LEA proteins are late embryonic proteins abundant in higher plant seed embryos. They may play an essential role in seed survival and in controlling water exchanges during seed desiccation and imbibition. This Helianthus annuus (Common sunflower) protein is 10 kDa late embryogenesis abundant protein.